The following is a 394-amino-acid chain: Large ribosomal subunit protein mL44 (394 aa).

Residues 1 to 21 (MFRHVAQNLGSRNTSIQSYRL) constitute a mitochondrion transit peptide.

The protein belongs to the ribonuclease III family. Mitochondrion-specific ribosomal protein mL44 subfamily. Component of the mitochondrial large ribosomal subunit (mt-LSU).

It localises to the mitochondrion. Its function is as follows. Component of the mitochondrial ribosome. May have a function in the assembly/stability of nascent mitochondrial polypeptides exiting the ribosome. This Caenorhabditis elegans protein is Large ribosomal subunit protein mL44.